Here is a 1133-residue protein sequence, read N- to C-terminus: Error-prone DNA polymerase (1133 aa).

Belongs to the DNA polymerase type-C family. DnaE2 subfamily.

It is found in the cytoplasm. It catalyses the reaction DNA(n) + a 2'-deoxyribonucleoside 5'-triphosphate = DNA(n+1) + diphosphate. Functionally, DNA polymerase involved in damage-induced mutagenesis and translesion synthesis (TLS). It is not the major replicative DNA polymerase. This is Error-prone DNA polymerase from Anaeromyxobacter sp. (strain K).